The following is a 507-amino-acid chain: Maturase K (507 aa).

Belongs to the intron maturase 2 family. MatK subfamily.

It is found in the plastid. The protein localises to the chloroplast. Its function is as follows. Usually encoded in the trnK tRNA gene intron. Probably assists in splicing its own and other chloroplast group II introns. This chain is Maturase K, found in Magnolia figo (Banana shrub).